Consider the following 504-residue polypeptide: Chromosomal replication initiator protein DnaA (504 aa).

Residues 1 to 109 (MTADPDPPFV…PTDEPEDAPD (109 aa)) are domain I, interacts with DnaA modulators. Residues 98–162 (ATPTDEPEDA…PDTSSDDSNA (65 aa)) form a disordered region. Positions 109–125 (DSFADSPAPASVPAGPA) are enriched in low complexity. The tract at residues 110-163 (SFADSPAPASVPAGPADADEIDDDRDARVNAQESWPKYFSRPEPDTSSDDSNAV) is domain II. Residues 164–380 (NLNRRYTFDT…GALIRVTAFA (217 aa)) form a domain III, AAA+ region region. 4 residues coordinate ATP: glycine 208, glycine 210, lysine 211, and threonine 212. The segment at 381–504 (SLNKTRIDRS…TTRIRQRAKR (124 aa)) is domain IV, binds dsDNA.

This sequence belongs to the DnaA family. Oligomerizes as a right-handed, spiral filament on DNA at oriC.

The protein resides in the cytoplasm. In terms of biological role, plays an essential role in the initiation and regulation of chromosomal replication. ATP-DnaA binds to the origin of replication (oriC) to initiate formation of the DNA replication initiation complex once per cell cycle. Binds the DnaA box (a 9 base pair repeat at the origin) and separates the double-stranded (ds)DNA. Forms a right-handed helical filament on oriC DNA; dsDNA binds to the exterior of the filament while single-stranded (ss)DNA is stabiized in the filament's interior. The ATP-DnaA-oriC complex binds and stabilizes one strand of the AT-rich DNA unwinding element (DUE), permitting loading of DNA polymerase. After initiation quickly degrades to an ADP-DnaA complex that is not apt for DNA replication. Binds acidic phospholipids. The probable consensus sequence for the DnaA box of this bacterium is 5'-TT(G/C)TCCACA-3'. This chain is Chromosomal replication initiator protein DnaA, found in Mycolicibacterium smegmatis (strain ATCC 700084 / mc(2)155) (Mycobacterium smegmatis).